Reading from the N-terminus, the 101-residue chain is Small ribosomal subunit protein uS14 (101 aa).

The protein belongs to the universal ribosomal protein uS14 family. In terms of assembly, part of the 30S ribosomal subunit. Contacts proteins S3 and S10.

Binds 16S rRNA, required for the assembly of 30S particles and may also be responsible for determining the conformation of the 16S rRNA at the A site. The protein is Small ribosomal subunit protein uS14 of Rhizobium etli (strain CIAT 652).